An 808-amino-acid chain; its full sequence is Protein translocase subunit SecA (808 aa).

Residues Gln87, 105–109 (GEGKT), and Asp493 contribute to the ATP site.

Belongs to the SecA family. Monomer and homodimer. Part of the essential Sec protein translocation apparatus which comprises SecA, SecYEG and auxiliary proteins SecDF. Other proteins may also be involved.

It is found in the cell membrane. Its subcellular location is the cytoplasm. The catalysed reaction is ATP + H2O + cellular proteinSide 1 = ADP + phosphate + cellular proteinSide 2.. Functionally, part of the Sec protein translocase complex. Interacts with the SecYEG preprotein conducting channel. Has a central role in coupling the hydrolysis of ATP to the transfer of proteins into and across the cell membrane, serving as an ATP-driven molecular motor driving the stepwise translocation of polypeptide chains across the membrane. This Mycoplasma pneumoniae (strain ATCC 29342 / M129 / Subtype 1) (Mycoplasmoides pneumoniae) protein is Protein translocase subunit SecA.